We begin with the raw amino-acid sequence, 1411 residues long: Regulating synaptic membrane exocytosis protein 2 (1411 aa).

Residues 1 to 33 (MSAPVGPRGRLAPIPAASQPPLQPEMPDLSHLT) are disordered. One can recognise a RabBD domain in the interval 26-185 (MPDLSHLTEE…TKSGAWFYNS (160 aa)). Residues 117-173 (KGDAPTCGICHKTKFADGCGHNCSYCQTKFCARCGGRVSLRSNKVMWVCNLCRKQQE) form an FYVE-type zinc finger. Positions 123, 126, 139, 142, 147, 150, 165, and 168 each coordinate Zn(2+). 6 stretches are compositionally biased toward basic and acidic residues: residues 203-216 (NEEA…KLHE), 273-287 (DQNR…REEY), 318-329 (DSDHLSYRDSNR), 348-366 (RDEY…RYRS), 382-401 (EQMR…RHSD), and 410-434 (EDSR…RRAA). 2 disordered regions span residues 203-598 (NEEA…SERQ) and 623-650 (SGVD…WQPS). Residue serine 400 is modified to Phosphoserine. Residues 451 to 463 (GPSSYAQRTTNHS) show a composition bias toward polar residues. A compositionally biased stretch (basic and acidic residues) spans 475-492 (DRPDLRRTDSLRKQHHLD). The segment covering 510–521 (RNDSLSSDQSES) has biased composition (polar residues). Basic residues predominate over residues 528–537 (KPHKSKKGGK). Residues 558 to 568 (SCDDVEIESES) are compositionally biased toward acidic residues. 2 stretches are compositionally biased toward basic and acidic residues: residues 569 to 583 (VSEK…RKTS) and 634 to 644 (NEEHSHSDKHP). Residues 668–754 (DGSVPRDSGA…EPQVELVVSR (87 aa)) form the PDZ domain. Threonine 689 carries the phosphothreonine modification. A disordered region spans residues 762-793 (IPDSTHAQLESSSSSFESQKMDRPSISVTSPM). A phosphoserine mark is found at serine 791 and serine 794. Residues 805-928 (LSGQLSIKLW…ALLDDEPHWY (124 aa)) form the C2 1 domain. 2 disordered regions span residues 939 to 973 (PLPH…SEVS) and 993 to 1190 (DLQS…STET). Polar residues-rich tracts occupy residues 994–1015 (LQSS…SPSG) and 1049–1059 (RTMTGHYNTIS). The segment covering 1060–1113 (RMDRHRVMDDHYSPDRDRDCEAADRQPYHRSRSTEQRPLLERTTTRSRSTERPD) has biased composition (basic and acidic residues). A compositionally biased stretch (polar residues) spans 1143–1153 (GSVQTSPSSTP). A Phosphoserine modification is found at serine 1148. A C2 2 domain is found at 1257-1375 (AMGDIQVGMM…ELSNMVIGWF (119 aa)). Serine 1396 and serine 1399 each carry phosphoserine.

Interacts with RAB3A and RAB3B that have been activated by GTP-binding. Interacts with RAB3C, RAB3D and RAB26. Interacts with TSPOAP1 and RIMBP2. Interacts with PPFIA3 and PPFIA4. Interacts via its zinc finger with the first C2 domain of UNC13A. Forms a complex consisting of UNC13A, RIMS2 and RAB3A. Heterodimer with PCLO. Part of a ternary complex involving PCLO and EPAC2. In terms of tissue distribution, widely expressed. Expressed in melanocytes. In fetal tissues, predominantly expressed in the brain. In the retina, expressed in the outer plexiform layer (at protein level). In the cerebellum, expressed in Purkinje cells (at protein level). In the pancreas, expressed in Langerhans islets (at protein level).

Its subcellular location is the cell membrane. The protein resides in the synapse. The protein localises to the presynaptic cell membrane. Rab effector involved in exocytosis. May act as scaffold protein. Plays a role in dendrite formation by melanocytes. This Homo sapiens (Human) protein is Regulating synaptic membrane exocytosis protein 2 (RIMS2).